The primary structure comprises 445 residues: Proline--tRNA ligase (445 aa).

It belongs to the class-II aminoacyl-tRNA synthetase family. ProS type 2 subfamily. Homodimer.

The protein localises to the cytoplasm. The catalysed reaction is tRNA(Pro) + L-proline + ATP = L-prolyl-tRNA(Pro) + AMP + diphosphate. Its function is as follows. Catalyzes the attachment of proline to tRNA(Pro) in a two-step reaction: proline is first activated by ATP to form Pro-AMP and then transferred to the acceptor end of tRNA(Pro). The chain is Proline--tRNA ligase from Cereibacter sphaeroides (strain ATCC 17025 / ATH 2.4.3) (Rhodobacter sphaeroides).